Reading from the N-terminus, the 346-residue chain is Uroporphyrinogen decarboxylase (346 aa).

Residues 26–30 (RQAGR), Phe-45, Asp-76, Tyr-153, Ser-208, and His-323 each bind substrate.

This sequence belongs to the uroporphyrinogen decarboxylase family. In terms of assembly, homodimer.

The protein localises to the cytoplasm. It catalyses the reaction uroporphyrinogen III + 4 H(+) = coproporphyrinogen III + 4 CO2. Its pathway is porphyrin-containing compound metabolism; protoporphyrin-IX biosynthesis; coproporphyrinogen-III from 5-aminolevulinate: step 4/4. Catalyzes the decarboxylation of four acetate groups of uroporphyrinogen-III to yield coproporphyrinogen-III. This Prochlorococcus marinus subsp. pastoris (strain CCMP1986 / NIES-2087 / MED4) protein is Uroporphyrinogen decarboxylase.